Here is a 283-residue protein sequence, read N- to C-terminus: Plasma membrane ascorbate-dependent reductase CYBRD1 (283 aa).

At 1–5 (MEGYK) the chain is on the cytoplasmic side. The chain crosses the membrane as a helical span at residues 6–30 (SFLVFLVSSLLLGFLGVIFTLVWVL). Residues 13–218 (SSLLLGFLGV…FGGLVVWMVT (206 aa)) form the Cytochrome b561 domain. At 31-45 (HWREGLGWDGGAAEF) the chain is on the extracellular side. Residues 46–67 (NWHPVLVTSGFIFIQGIAIIVY) form a helical membrane-spanning segment. Heme b is bound by residues H48, R68, and K77. At 68 to 76 (RLPWTWNCS) the chain is on the cytoplasmic side. L-ascorbate contacts are provided by K77 and K81. A helical transmembrane segment spans residues 77–103 (KLLMKFIHAGLHLTAFVFTIVALVAVF). Position 84 (H84) interacts with heme b. Over 104–116 (DFHNAKNIPNMYS) the chain is Extracellular. H106 is a Fe(3+) binding site. Heme b-binding positions include 113 to 116 (NMYS) and H118. The helical transmembrane segment at 117–142 (LHSWIGLTVVILYALQLVLGVSIYLL) threads the bilayer. The Cytoplasmic portion of the chain corresponds to 143 to 149 (PFARDTL). Residue R150 participates in L-ascorbate binding. The chain crosses the membrane as a helical span at residues 150-177 (RAALMPVHVYSGLLIFGTVIATALMGIT). Residues H157 and E178 each contribute to the heme b site. The Extracellular segment spans residues 178-195 (EKLIFSLKEPPYSKMPPE). A helical membrane pass occupies residues 196–220 (AIFVNTFGLIILVFGGLVVWMVTTP). The Cytoplasmic portion of the chain corresponds to 221-283 (AWKRPREQEI…LDDAGQRSTM (63 aa)). Residue K223 participates in heme b binding. The tract at residues 234–263 (NPTVSSPDGTEEGSTITDCSNTEKSDVELN) is disordered. The segment covering 235–253 (PTVSSPDGTEEGSTITDCS) has biased composition (polar residues). Positions 254–263 (NTEKSDVELN) are enriched in basic and acidic residues.

Homodimer. Heme b serves as cofactor.

Its subcellular location is the cell membrane. The protein localises to the apical cell membrane. The catalysed reaction is Fe(3+)(out) + L-ascorbate(in) = monodehydro-L-ascorbate radical(in) + Fe(2+)(out) + H(+). It carries out the reaction Cu(2+)(out) + L-ascorbate(in) = Cu(+)(out) + monodehydro-L-ascorbate radical(in) + H(+). The enzyme catalyses monodehydro-L-ascorbate radical(out) + L-ascorbate(in) = monodehydro-L-ascorbate radical(in) + L-ascorbate(out). Plasma membrane reductase that uses cytoplasmic ascorbate as an electron donor to reduce extracellular Fe(3+) into Fe(2+). It is also able to reduce extracellular monodehydro-L-ascorbate and may be involved in extracellular ascorbate regeneration. May also function as a cupric transmembrane reductase. The sequence is that of Plasma membrane ascorbate-dependent reductase CYBRD1 (cybrd1) from Xenopus tropicalis (Western clawed frog).